We begin with the raw amino-acid sequence, 320 residues long: MDQSNYSSLHGFILLGFSNHPKMEMILSGVVAIFYLITLVGNTAIILASLLDSQLHTPMYFFLRNLSFLDLCFTTSIIPQMLVNLWGPDKTISYVGCIIQLYVYMWLGSVECLLLAVMSYDRFTAICKPLHYFVVMNPHLCLKMIIMIWSISLANSVVLCTLTLNLPTCGNNILDHFLCELPALVKIACVDTTTVEMSVFALGIIIVLTPLILILISYGYIAKAVLRTKSKASQRKAMNTCGSHLTVVSMFYGTIIYMYLQPGNRASKDQGKFLTLFYTVITPSLNPLIYTLRNKDMKDALKKLMRFHHKSTKIKRNCKS.

The Extracellular segment spans residues 1–25 (MDQSNYSSLHGFILLGFSNHPKMEM). A glycan (N-linked (GlcNAc...) asparagine) is linked at asparagine 5. Residues 26 to 49 (ILSGVVAIFYLITLVGNTAIILAS) form a helical membrane-spanning segment. The Cytoplasmic portion of the chain corresponds to 50-57 (LLDSQLHT). A helical membrane pass occupies residues 58–79 (PMYFFLRNLSFLDLCFTTSIIP). Residues 80-100 (QMLVNLWGPDKTISYVGCIIQ) lie on the Extracellular side of the membrane. The cysteines at positions 97 and 189 are disulfide-linked. A helical membrane pass occupies residues 101-120 (LYVYMWLGSVECLLLAVMSY). At 121-139 (DRFTAICKPLHYFVVMNPH) the chain is on the cytoplasmic side. Residues 140 to 158 (LCLKMIIMIWSISLANSVV) form a helical membrane-spanning segment. Topologically, residues 159–195 (LCTLTLNLPTCGNNILDHFLCELPALVKIACVDTTTV) are extracellular. A helical transmembrane segment spans residues 196-219 (EMSVFALGIIIVLTPLILILISYG). Residues 220–236 (YIAKAVLRTKSKASQRK) lie on the Cytoplasmic side of the membrane. Residues 237–259 (AMNTCGSHLTVVSMFYGTIIYMY) traverse the membrane as a helical segment. At 260–272 (LQPGNRASKDQGK) the chain is on the extracellular side. A helical transmembrane segment spans residues 273-292 (FLTLFYTVITPSLNPLIYTL). At 293–320 (RNKDMKDALKKLMRFHHKSTKIKRNCKS) the chain is on the cytoplasmic side.

This sequence belongs to the G-protein coupled receptor 1 family.

It localises to the cell membrane. Odorant receptor. The polypeptide is Olfactory receptor 2W1 (OR2W1) (Homo sapiens (Human)).